Reading from the N-terminus, the 413-residue chain is Serine hydroxymethyltransferase (413 aa).

(6S)-5,6,7,8-tetrahydrofolate-binding positions include leucine 118 and 122–124 (GHL). At lysine 228 the chain carries N6-(pyridoxal phosphate)lysine.

It belongs to the SHMT family. As to quaternary structure, homodimer. Requires pyridoxal 5'-phosphate as cofactor.

The protein resides in the cytoplasm. The enzyme catalyses (6R)-5,10-methylene-5,6,7,8-tetrahydrofolate + glycine + H2O = (6S)-5,6,7,8-tetrahydrofolate + L-serine. Its pathway is one-carbon metabolism; tetrahydrofolate interconversion. It participates in amino-acid biosynthesis; glycine biosynthesis; glycine from L-serine: step 1/1. Its function is as follows. Catalyzes the reversible interconversion of serine and glycine with tetrahydrofolate (THF) serving as the one-carbon carrier. This reaction serves as the major source of one-carbon groups required for the biosynthesis of purines, thymidylate, methionine, and other important biomolecules. Also exhibits THF-independent aldolase activity toward beta-hydroxyamino acids, producing glycine and aldehydes, via a retro-aldol mechanism. The sequence is that of Serine hydroxymethyltransferase from Phytoplasma australiense.